A 405-amino-acid chain; its full sequence is Arginine biosynthesis bifunctional protein ArgJ (405 aa).

Substrate contacts are provided by Thr167, Lys190, Thr201, Glu281, Asn400, and Ser405. Residue Thr201 is the Nucleophile of the active site.

Belongs to the ArgJ family. Heterotetramer of two alpha and two beta chains.

Its subcellular location is the cytoplasm. The catalysed reaction is N(2)-acetyl-L-ornithine + L-glutamate = N-acetyl-L-glutamate + L-ornithine. The enzyme catalyses L-glutamate + acetyl-CoA = N-acetyl-L-glutamate + CoA + H(+). Its pathway is amino-acid biosynthesis; L-arginine biosynthesis; L-ornithine and N-acetyl-L-glutamate from L-glutamate and N(2)-acetyl-L-ornithine (cyclic): step 1/1. It functions in the pathway amino-acid biosynthesis; L-arginine biosynthesis; N(2)-acetyl-L-ornithine from L-glutamate: step 1/4. Its function is as follows. Catalyzes two activities which are involved in the cyclic version of arginine biosynthesis: the synthesis of N-acetylglutamate from glutamate and acetyl-CoA as the acetyl donor, and of ornithine by transacetylation between N(2)-acetylornithine and glutamate. The polypeptide is Arginine biosynthesis bifunctional protein ArgJ (Nocardia farcinica (strain IFM 10152)).